Here is a 113-residue protein sequence, read N- to C-terminus: Ig kappa chain V-II region 17S29.1 (113 aa).

The interval 1–23 (DIVMTQAVFSNPVTLGTSASISC) is framework-1. C23 and C93 form a disulfide bridge. The complementarity-determining-1 stretch occupies residues 24–39 (RSSKSLLHSNGITYLY). The segment at 40-54 (WYLQKPGQSPQLLLY) is framework-2. A complementarity-determining-2 region spans residues 55–61 (QMSNLAS). Residues 62–93 (GVPDRFSSSGSGTDFTLRISRVEAEDVGVYYC) form a framework-3 region. The complementarity-determining-3 stretch occupies residues 94-102 (AHNLELPYT). Residues 103–112 (FGGGTKLEIK) form a framework-4 region.

Its function is as follows. Anti-streptococcal group A carbohydrate antibody. This is Ig kappa chain V-II region 17S29.1 from Mus musculus (Mouse).